A 584-amino-acid polypeptide reads, in one-letter code: Eukaryotic translation initiation factor 3 subunit D (584 aa).

Residues 118 to 184 are disordered; it reads IFTRGRGQRG…KDYDKPQRNR (67 aa). Gly residues predominate over residues 127-167; sequence GRGGQDTRGGGRQQFQRGGRGGQQYGGGGYSDRGGGRGGGA. Residues 173 to 184 show a composition bias toward basic and acidic residues; the sequence is GWKDYDKPQRNR. Positions 312-326 are RNA gate; sequence ALDMVTVNENAADAP. The interval 563–584 is disordered; sequence PANGLDDDDEGPEPEGVAEEED. Over residues 567 to 584 the composition is skewed to acidic residues; sequence LDDDDEGPEPEGVAEEED.

The protein belongs to the eIF-3 subunit D family. In terms of assembly, component of the eukaryotic translation initiation factor 3 (eIF-3) complex.

Its subcellular location is the cytoplasm. In terms of biological role, mRNA cap-binding component of the eukaryotic translation initiation factor 3 (eIF-3) complex, which is involved in protein synthesis of a specialized repertoire of mRNAs and, together with other initiation factors, stimulates binding of mRNA and methionyl-tRNAi to the 40S ribosome. The eIF-3 complex specifically targets and initiates translation of a subset of mRNAs involved in cell proliferation. In the eIF-3 complex, eif3d specifically recognizes and binds the 7-methylguanosine cap of a subset of mRNAs. This chain is Eukaryotic translation initiation factor 3 subunit D, found in Chaetomium globosum (strain ATCC 6205 / CBS 148.51 / DSM 1962 / NBRC 6347 / NRRL 1970) (Soil fungus).